The primary structure comprises 262 residues: Polyamine aminopropyltransferase (262 aa).

The PABS domain maps to 1-249 (MWITQEITPY…DIHRAAFALP (249 aa)). S-methyl-5'-thioadenosine is bound at residue Asn29. Position 83 (Asp83) interacts with spermidine. The active-site Proton acceptor is the Asp155.

This sequence belongs to the spermidine/spermine synthase family. Homodimer or homotetramer.

It is found in the cytoplasm. The enzyme catalyses S-adenosyl 3-(methylsulfanyl)propylamine + putrescine = S-methyl-5'-thioadenosine + spermidine + H(+). The protein operates within amine and polyamine biosynthesis; spermidine biosynthesis; spermidine from putrescine: step 1/1. Its function is as follows. Catalyzes the irreversible transfer of a propylamine group from the amino donor S-adenosylmethioninamine (decarboxy-AdoMet) to putrescine (1,4-diaminobutane) to yield spermidine. This Helicobacter acinonychis (strain Sheeba) protein is Polyamine aminopropyltransferase.